A 338-amino-acid polypeptide reads, in one-letter code: tRNA N6-adenosine threonylcarbamoyltransferase (338 aa).

Fe cation is bound by residues H111 and H115. Substrate contacts are provided by residues 134-138, D167, G180, and N272; that span reads LVSGG. Fe cation is bound at residue D300.

It belongs to the KAE1 / TsaD family. Fe(2+) is required as a cofactor.

The protein localises to the cytoplasm. It carries out the reaction L-threonylcarbamoyladenylate + adenosine(37) in tRNA = N(6)-L-threonylcarbamoyladenosine(37) in tRNA + AMP + H(+). Its function is as follows. Required for the formation of a threonylcarbamoyl group on adenosine at position 37 (t(6)A37) in tRNAs that read codons beginning with adenine. Is involved in the transfer of the threonylcarbamoyl moiety of threonylcarbamoyl-AMP (TC-AMP) to the N6 group of A37, together with TsaE and TsaB. TsaD likely plays a direct catalytic role in this reaction. This chain is tRNA N6-adenosine threonylcarbamoyltransferase, found in Vibrio atlanticus (strain LGP32) (Vibrio splendidus (strain Mel32)).